The primary structure comprises 947 residues: Bifunctional glutamine synthetase adenylyltransferase/adenylyl-removing enzyme (947 aa).

Residues 1–440 (MTPLSSPLSQ…VFNELIGDDE (440 aa)) form an adenylyl removase region. An adenylyl transferase region spans residues 450-947 (SEPWREVWQD…ASWRKWLVAV (498 aa)).

It belongs to the GlnE family. Mg(2+) is required as a cofactor.

It carries out the reaction [glutamine synthetase]-O(4)-(5'-adenylyl)-L-tyrosine + phosphate = [glutamine synthetase]-L-tyrosine + ADP. The enzyme catalyses [glutamine synthetase]-L-tyrosine + ATP = [glutamine synthetase]-O(4)-(5'-adenylyl)-L-tyrosine + diphosphate. Its function is as follows. Involved in the regulation of glutamine synthetase GlnA, a key enzyme in the process to assimilate ammonia. When cellular nitrogen levels are high, the C-terminal adenylyl transferase (AT) inactivates GlnA by covalent transfer of an adenylyl group from ATP to specific tyrosine residue of GlnA, thus reducing its activity. Conversely, when nitrogen levels are low, the N-terminal adenylyl removase (AR) activates GlnA by removing the adenylyl group by phosphorolysis, increasing its activity. The regulatory region of GlnE binds the signal transduction protein PII (GlnB) which indicates the nitrogen status of the cell. This is Bifunctional glutamine synthetase adenylyltransferase/adenylyl-removing enzyme from Salmonella enteritidis PT4 (strain P125109).